Reading from the N-terminus, the 115-residue chain is Large ribosomal subunit protein bL20 (115 aa).

It belongs to the bacterial ribosomal protein bL20 family.

In terms of biological role, binds directly to 23S ribosomal RNA and is necessary for the in vitro assembly process of the 50S ribosomal subunit. It is not involved in the protein synthesizing functions of that subunit. This Borrelia garinii subsp. bavariensis (strain ATCC BAA-2496 / DSM 23469 / PBi) (Borreliella bavariensis) protein is Large ribosomal subunit protein bL20.